The sequence spans 283 residues: (+)-O-methylkolavelool synthase (283 aa).

Residues glutamine 106, 129-130 (NA), and histidine 151 each bind S-adenosyl-L-methionine.

The protein belongs to the methyltransferase superfamily.

The enzyme catalyses (+)-kolavelool + S-adenosyl-L-methionine = (+)-O-methylkolavelool + S-adenosyl-L-homocysteine + H(+). Functionally, involved in the biosynthesis of the diterpene (+)-O-methylkolavelool. Catalyzes the transfer of a methyl group from S-adenosyl-L-methionine to the hydroxy group of (+)-kolavelool, forming (+)-O-methylkolavelool. This chain is (+)-O-methylkolavelool synthase, found in Herpetosiphon aurantiacus (strain ATCC 23779 / DSM 785 / 114-95).